Here is a 159-residue protein sequence, read N- to C-terminus: 2-C-methyl-D-erythritol 2,4-cyclodiphosphate synthase (159 aa).

Residues aspartate 10 and histidine 12 each contribute to the a divalent metal cation site. 4-CDP-2-C-methyl-D-erythritol 2-phosphate-binding positions include 10-12 and 36-37; these read DVH and HS. Residue histidine 44 coordinates a divalent metal cation. Residues 58 to 60, 134 to 137, phenylalanine 141, and arginine 144 contribute to the 4-CDP-2-C-methyl-D-erythritol 2-phosphate site; these read DIG and TTTE.

This sequence belongs to the IspF family. Homotrimer. Requires a divalent metal cation as cofactor.

The catalysed reaction is 4-CDP-2-C-methyl-D-erythritol 2-phosphate = 2-C-methyl-D-erythritol 2,4-cyclic diphosphate + CMP. It participates in isoprenoid biosynthesis; isopentenyl diphosphate biosynthesis via DXP pathway; isopentenyl diphosphate from 1-deoxy-D-xylulose 5-phosphate: step 4/6. In terms of biological role, involved in the biosynthesis of isopentenyl diphosphate (IPP) and dimethylallyl diphosphate (DMAPP), two major building blocks of isoprenoid compounds. Catalyzes the conversion of 4-diphosphocytidyl-2-C-methyl-D-erythritol 2-phosphate (CDP-ME2P) to 2-C-methyl-D-erythritol 2,4-cyclodiphosphate (ME-CPP) with a corresponding release of cytidine 5-monophosphate (CMP). The chain is 2-C-methyl-D-erythritol 2,4-cyclodiphosphate synthase from Bacteroides fragilis (strain ATCC 25285 / DSM 2151 / CCUG 4856 / JCM 11019 / LMG 10263 / NCTC 9343 / Onslow / VPI 2553 / EN-2).